Reading from the N-terminus, the 344-residue chain is Cell cycle control protein 50C (344 aa).

The Cytoplasmic segment spans residues 1–34 (MEETPQHCLSRLPDNSALKQQELPAHRLYFTARR). The helical transmembrane segment at 35-55 (VLFVFFTTGIFCLCMGIILIL) threads the bilayer. Residues 56–306 (SARSTQEIEI…STLTWCGGNS (251 aa)) lie on the Extracellular side of the membrane. Asn-66 and Asn-261 each carry an N-linked (GlcNAc...) asparagine glycan. A helical membrane pass occupies residues 307 to 327 (LFLGLAYTVTGAITWLASFTM). Residues 328-344 (MAIHITLKNKQMSFFHQ) are Cytoplasmic-facing.

The protein belongs to the CDC50/LEM3 family. In terms of tissue distribution, specifically expressed in testis.

The protein resides in the membrane. The protein is Cell cycle control protein 50C (TMEM30C) of Macaca fascicularis (Crab-eating macaque).